Reading from the N-terminus, the 738-residue chain is Junction plakoglobin (738 aa).

12 ARM repeats span residues 128 to 167, 168 to 211, 212 to 251, 254 to 293, 294 to 337, 338 to 377, 379 to 416, 419 to 460, 466 to 506, 508 to 547, 570 to 609, and 611 to 657; these read NYQD…QLSK, KEAS…LSHH, REGL…NLLL, EGAK…LLAY, GNQE…LSVC, PSNK…NLSD, ATKQ…NLTC, GRNK…HLTS, EVAQ…NLAL, PANH…QPYT, PVNR…ELAQ, and KEAA…ADYR.

Belongs to the beta-catenin family. As to quaternary structure, homodimer.

Its subcellular location is the cell junction. The protein resides in the adherens junction. It localises to the desmosome. It is found in the cytoplasm. The protein localises to the cytoskeleton. Its subcellular location is the membrane. In terms of biological role, common junctional plaque protein. The membrane-associated plaques are architectural elements in an important strategic position to influence the arrangement and function of both the cytoskeleton and the cells within the tissue. The presence of plakoglobin in both the desmosomes and in the intermediate junctions suggests that it plays a central role in the structure and function of submembranous plaques. The protein is Junction plakoglobin (jup) of Xenopus laevis (African clawed frog).